The chain runs to 477 residues: Regulator of G-protein signaling 7 (477 aa).

A DEP domain is found at 37–112 (EKNGIPIRTV…DDGTFYRFQT (76 aa)). Ser-229 and Ser-241 each carry phosphoserine. A disordered region spans residues 236-257 (DIRSHSPTHTPTPETKPPTEDE). Thr-243 is modified (phosphothreonine). A G protein gamma domain is found at 255–316 (EDELHRQIKY…LSDDTTFWEL (62 aa)). Positions 333 to 448 (GMDEALKDPV…IRSSAYQELL (116 aa)) constitute an RGS domain. Ser-434 carries the post-translational modification Phosphoserine.

In terms of assembly, interacts with GNB5, forming the RGS7-GNB5 complex. Interacts with GPR158; promotes the GTPase activator activity of the RGS7-GNB5 complex in absence of glycine, in contrast GTPase activator activity of the RGS7-GNB5 complex is inhibited in presence of glycine. Interacts with GPR179. Interacts with PKD1; this prevents rapid proteasomal degradation. Interacts with RGS7BP, leading to regulate the subcellular location of the heterodimer formed with GNB5. Interacts (phosphorylated form) with 14-3-3 protein YWHAQ. Interacts with SNAPIN. Interacts with GNAI1. Interacts with GNAO1, GNAI3 and GNAZ. In terms of processing, palmitoylated. Ubiquitinated, leading to rapid proteasomal degradation. Post-translationally, phosphorylation and subsequent interaction with 14-3-3 proteins inhibits GAP activity. As to expression, brain-specific. Predominantly cerebellar granule cells.

It localises to the cytoplasm. The protein resides in the cytosol. Its subcellular location is the cell membrane. It is found in the membrane. GTPase activator component of the RGS7-GNB5 complex that regulates G protein-coupled receptor signaling cascades. The RGS7-GNB5 complex acts as an inhibitor signal transduction by promoting the GTPase activity of G protein alpha subunits, such as GNAO1, thereby driving them into their inactive GDP-bound form. May play a role in synaptic vesicle exocytosis. Glycine-dependent regulation of the RGS7-GNB5 complex by GPR158 affects mood and cognition via its ability to regulate neuronal excitability in L2/L3 pyramidal neurons of the prefrontal cortex. Modulates the activity of potassium channels that are activated by GNAO1 in response to muscarinic acetylcholine receptor M2/CHRM2 signaling. The chain is Regulator of G-protein signaling 7 (Rgs7) from Rattus norvegicus (Rat).